A 216-amino-acid polypeptide reads, in one-letter code: Imidazole glycerol phosphate synthase subunit HisH (216 aa).

Residues 2-216 (RVAIIDYGSG…LISNFLRWKP (215 aa)) form the Glutamine amidotransferase type-1 domain. Catalysis depends on cysteine 88, which acts as the Nucleophile. Residues histidine 196 and glutamate 198 contribute to the active site.

As to quaternary structure, heterodimer of HisH and HisF.

Its subcellular location is the cytoplasm. The enzyme catalyses 5-[(5-phospho-1-deoxy-D-ribulos-1-ylimino)methylamino]-1-(5-phospho-beta-D-ribosyl)imidazole-4-carboxamide + L-glutamine = D-erythro-1-(imidazol-4-yl)glycerol 3-phosphate + 5-amino-1-(5-phospho-beta-D-ribosyl)imidazole-4-carboxamide + L-glutamate + H(+). The catalysed reaction is L-glutamine + H2O = L-glutamate + NH4(+). It functions in the pathway amino-acid biosynthesis; L-histidine biosynthesis; L-histidine from 5-phospho-alpha-D-ribose 1-diphosphate: step 5/9. In terms of biological role, IGPS catalyzes the conversion of PRFAR and glutamine to IGP, AICAR and glutamate. The HisH subunit catalyzes the hydrolysis of glutamine to glutamate and ammonia as part of the synthesis of IGP and AICAR. The resulting ammonia molecule is channeled to the active site of HisF. The chain is Imidazole glycerol phosphate synthase subunit HisH from Agrobacterium fabrum (strain C58 / ATCC 33970) (Agrobacterium tumefaciens (strain C58)).